Consider the following 445-residue polypeptide: Probable histidine--tRNA ligase, cytoplasmic (445 aa).

Belongs to the class-II aminoacyl-tRNA synthetase family.

The protein localises to the cytoplasm. It catalyses the reaction tRNA(His) + L-histidine + ATP = L-histidyl-tRNA(His) + AMP + diphosphate + H(+). This chain is Probable histidine--tRNA ligase, cytoplasmic, found in Antonospora locustae (Microsporidian parasite).